The primary structure comprises 453 residues: Aspartate aminotransferase, chloroplastic (453 aa).

A chloroplast-targeting transit peptide spans 1 to 44 (MASLMLSLGSTSLLPREINKDKLKLGTSASNPFLKAKSFSRVTM). Residues glycine 85, tryptophan 181, and asparagine 234 each contribute to the L-aspartate site. An N6-(pyridoxal phosphate)lysine modification is found at lysine 298. Arginine 427 contributes to the L-aspartate binding site.

It belongs to the class-I pyridoxal-phosphate-dependent aminotransferase family. As to quaternary structure, homodimer. Pyridoxal 5'-phosphate is required as a cofactor.

Its subcellular location is the plastid. It localises to the chloroplast. It is found in the amyloplast. The enzyme catalyses L-aspartate + 2-oxoglutarate = oxaloacetate + L-glutamate. Functionally, amino acid aminotransferase important for the metabolism of amino acids and Krebs-cycle related organic acids. No activity with D-Asp or D-Ala as amino donors. In plants, it is involved in nitrogen metabolism and in aspects of carbon and energy metabolism. The sequence is that of Aspartate aminotransferase, chloroplastic (ASP5) from Arabidopsis thaliana (Mouse-ear cress).